The following is a 677-amino-acid chain: Methionine--tRNA ligase (677 aa).

Positions P14–H24 match the 'HIGH' region motif. The Zn(2+) site is built by C145, C148, C158, and C161. The 'KMSKS' region signature appears at K331 to S335. K334 contacts ATP. Residues A575–K677 form the tRNA-binding domain.

This sequence belongs to the class-I aminoacyl-tRNA synthetase family. MetG type 1 subfamily. In terms of assembly, homodimer. Requires Zn(2+) as cofactor.

The protein resides in the cytoplasm. It carries out the reaction tRNA(Met) + L-methionine + ATP = L-methionyl-tRNA(Met) + AMP + diphosphate. Its function is as follows. Is required not only for elongation of protein synthesis but also for the initiation of all mRNA translation through initiator tRNA(fMet) aminoacylation. The sequence is that of Methionine--tRNA ligase from Pseudomonas aeruginosa (strain LESB58).